The sequence spans 62 residues: Alpha-lytic protease L1 (62 aa).

S48 functions as the Charge relay system in the catalytic mechanism.

The protein belongs to the peptidase S1 family. In terms of assembly, monomer.

The protein resides in the secreted. It catalyses the reaction Preferential cleavage: Ala-|-Xaa, Val-|-Xaa in bacterial cell walls, elastin and other proteins.. With respect to regulation, inhibited by phenylmethanesulfonyl fluoride (PMSF) and p-chloromercuribenzoate (PCMB). Has bacteriolytic activity. The sequence is that of Alpha-lytic protease L1 from Lysobacter sp. (strain XL1).